The following is a 191-amino-acid chain: Neurotrophic factor BDNF precursor form (191 aa).

Positions 1–23 are disordered; the sequence is GQGSLAYPGLRTQGNLETLGGPN. Residues 1–100 constitute a propeptide that is removed on maturation; sequence GQGSLAYPGL…AANMSMRVRR (100 aa). Asn93 is a glycosylation site (N-linked (GlcNAc...) asparagine). Cysteines 113 and 180 form a disulfide.

Belongs to the NGF-beta family.

It is found in the secreted. Promotes the survival of neuronal populations that are all located either in the central nervous system or directly connected to it. The sequence is that of Neurotrophic factor BDNF precursor form (BDNF) from Anilius scytale (Coral cylinder snake).